The following is a 299-amino-acid chain: Putative ammonium transporter 4 member 1 (299 aa).

5 helical membrane passes run 16-36 (AWPL…LVIL), 59-79 (VLLT…GFNG), 104-124 (LLVW…ISAV), 158-178 (VLHT…LLLL), and 218-238 (AGIA…CLAV).

Belongs to the ammonia transporter channel (TC 1.A.11.2) family.

It localises to the membrane. The sequence is that of Putative ammonium transporter 4 member 1 (AMT4-1) from Oryza sativa subsp. japonica (Rice).